Consider the following 175-residue polypeptide: Putative metal-dependent hydrolase BPUM_0784 (175 aa).

3 residues coordinate Zn(2+): His-65, His-157, and His-161.

This sequence belongs to the metal hydrolase YfiT family. As to quaternary structure, homodimer. Zn(2+) serves as cofactor.

It localises to the cytoplasm. Its function is as follows. Possible metal-dependent hydrolase. In Bacillus pumilus (strain SAFR-032), this protein is Putative metal-dependent hydrolase BPUM_0784.